The following is a 213-amino-acid chain: tRNA (guanine-N(7)-)-methyltransferase (213 aa).

S-adenosyl-L-methionine-binding residues include Glu-38, Glu-63, Asp-91, and Asp-113. Residue Asp-113 is part of the active site. Substrate-binding positions include Lys-117, Asp-149, and 192 to 195 (TEYE).

It belongs to the class I-like SAM-binding methyltransferase superfamily. TrmB family.

It carries out the reaction guanosine(46) in tRNA + S-adenosyl-L-methionine = N(7)-methylguanosine(46) in tRNA + S-adenosyl-L-homocysteine. Its pathway is tRNA modification; N(7)-methylguanine-tRNA biosynthesis. Functionally, catalyzes the formation of N(7)-methylguanine at position 46 (m7G46) in tRNA. In Mycoplasmoides gallisepticum (strain R(low / passage 15 / clone 2)) (Mycoplasma gallisepticum), this protein is tRNA (guanine-N(7)-)-methyltransferase.